The primary structure comprises 293 residues: Probable chromosome 2-partitioning protein ParB (293 aa).

It belongs to the ParB family.

Its function is as follows. Involved in chromosome partition. Localize to both poles of the predivisional cell following completion of DNA replication. Binds to the DNA origin of replication. This is Probable chromosome 2-partitioning protein ParB (parB2) from Deinococcus radiodurans (strain ATCC 13939 / DSM 20539 / JCM 16871 / CCUG 27074 / LMG 4051 / NBRC 15346 / NCIMB 9279 / VKM B-1422 / R1).